The primary structure comprises 179 residues: Apoptosis regulator Bcl-2 homolog (179 aa).

Positions 76–95 (ELFKDLINWGRICGFIVFSA) match the BH1 motif. A BH2 motif is present at residues 126–141 (PWMISHGGQEEFLAFS).

The protein belongs to the Bcl-2 family. As to quaternary structure, interacts with host BECN1 (via BH3 homology domain); this interaction allows the virus to inhibit BECN1, and thus autophagy. Interacts with host BID. Interacts with host BAX.

It is found in the host mitochondrion. It localises to the host endoplasmic reticulum. Suppresses apoptosis in host cell to promote the viral replication. Has the ability to potentially bind to all the members of the proapoptotic Bcl-2 family. Inhibits autophagy by interacting with host Beclin 1 (BECN1). The polypeptide is Apoptosis regulator Bcl-2 homolog (Ornithodoros (relapsing fever ticks)).